The primary structure comprises 108 residues: MFFQTTIVAALAFLAVATPLALRTDSRCNTESVKCCNKSEDAETFKKSASAALIPIKIGDITGKVYSECSPIVGLIGGSSCSAQTVCCDNAKFNGLVNIGCTPINVAL.

Positions methionine 1 to alanine 17 are cleaved as a signal peptide. 4 disulfides stabilise this stretch: cysteine 28–cysteine 87, cysteine 35–cysteine 81, cysteine 36–cysteine 69, and cysteine 88–cysteine 101. An N-linked (GlcNAc...) asparagine glycan is attached at asparagine 37.

This sequence belongs to the fungal hydrophobin family. As to quaternary structure, self-assembles to form functional amyloid fibrils called rodlets. Self-assembly into fibrillar rodlets occurs spontaneously at hydrophobic:hydrophilic interfaces and the rodlets further associate laterally to form amphipathic monolayers.

The protein resides in the secreted. It is found in the cell wall. In terms of biological role, aerial growth, conidiation, and dispersal of filamentous fungi in the environment rely upon a capability of their secreting small amphipathic proteins called hydrophobins (HPBs) with low sequence identity. Class I can self-assemble into an outermost layer of rodlet bundles on aerial cell surfaces, conferring cellular hydrophobicity that supports fungal growth, development and dispersal; whereas Class II form highly ordered films at water-air interfaces through intermolecular interactions but contribute nothing to the rodlet structure. Vmh3 is a class I hydrophobin that is essential for the maintenance of the surface hydrophobicity of the mycelium and might be involved in the development of fruiting bodies. Plays an important role in hyphal resistance against environmental stress. Necessary for the efficient biodegradation of lignin. The chain is Class I hydrophobin 3 from Pleurotus ostreatus (Oyster mushroom).